The following is a 103-amino-acid chain: Large ribosomal subunit protein uL24 (103 aa).

This sequence belongs to the universal ribosomal protein uL24 family. In terms of assembly, part of the 50S ribosomal subunit.

One of two assembly initiator proteins, it binds directly to the 5'-end of the 23S rRNA, where it nucleates assembly of the 50S subunit. Its function is as follows. One of the proteins that surrounds the polypeptide exit tunnel on the outside of the subunit. This is Large ribosomal subunit protein uL24 from Endomicrobium trichonymphae.